The primary structure comprises 224 residues: Ribose-5-phosphate isomerase A (224 aa).

Substrate-binding positions include 32 to 35 (TGST), 85 to 88 (DGAD), and 98 to 101 (KGGG). Residue glutamate 107 is the Proton acceptor of the active site. Position 125 (lysine 125) interacts with substrate.

This sequence belongs to the ribose 5-phosphate isomerase family. In terms of assembly, homodimer.

It catalyses the reaction aldehydo-D-ribose 5-phosphate = D-ribulose 5-phosphate. It participates in carbohydrate degradation; pentose phosphate pathway; D-ribose 5-phosphate from D-ribulose 5-phosphate (non-oxidative stage): step 1/1. Functionally, catalyzes the reversible conversion of ribose-5-phosphate to ribulose 5-phosphate. The chain is Ribose-5-phosphate isomerase A from Pseudomonas putida (strain W619).